The chain runs to 478 residues: Divinyl ether synthase CYP74D2 (478 aa).

Cysteine 431 lines the heme pocket.

Belongs to the cytochrome P450 family. 9-divinyl ether synthase subfamily. In terms of tissue distribution, expressed in roots.

It catalyses the reaction (9S)-hydroperoxy-(10E,12Z)-octadecadienoate = colneleate + H2O. The enzyme catalyses (9S)-hydroperoxy-(10E,12Z,15Z)-octadecatrienoate = colnelenate + H2O. Functionally, involved in the biosynthesis of the anti-fungal and antibacterial toxins colneleate and colnelenate. Can use (9S)-hydroperoxy-(10E,12Z)-octadecadienoate (9-HPOD) and (9S)-hydroperoxy-(10E,12Z,15Z)-octadecatrienoate (9-HPOT) as substrates but has no activity with the corresponding 13-hydroperoxides (13-HPOD and 13-HPOT). This Solanum tuberosum (Potato) protein is Divinyl ether synthase CYP74D2.